The primary structure comprises 216 residues: Ribosomal RNA small subunit methyltransferase G (216 aa).

Residues Gly-83, Met-88, 134 to 135 (VE), and Arg-149 each bind S-adenosyl-L-methionine.

Belongs to the methyltransferase superfamily. RNA methyltransferase RsmG family.

Its subcellular location is the cytoplasm. It carries out the reaction guanosine(527) in 16S rRNA + S-adenosyl-L-methionine = N(7)-methylguanosine(527) in 16S rRNA + S-adenosyl-L-homocysteine. In terms of biological role, specifically methylates the N7 position of guanine in position 527 of 16S rRNA. This is Ribosomal RNA small subunit methyltransferase G from Pseudomonas entomophila (strain L48).